Consider the following 421-residue polypeptide: Protein OS-9 homolog (421 aa).

An N-terminal signal peptide occupies residues 1–26 (MWRWSTGVRTMLGYAMCFLALGSALT). Residues 99 to 220 (EEATVGKKLE…LVSIPSLCEL (122 aa)) enclose the MRH domain. W115 contributes to the a mannooligosaccharide derivative binding site. N125 is a glycosylation site (N-linked (GlcNAc...) asparagine). Intrachain disulfides connect C173/C206 and C188/C218. 3 residues coordinate a mannooligosaccharide derivative: R180, E202, and Y208. N-linked (GlcNAc...) asparagine glycosylation is found at N271 and N332. Acidic residues predominate over residues 375-394 (GNSEDYEQQAPEQLDEEEAE). The disordered stretch occupies residues 375–403 (GNSEDYEQQAPEQLDEEEAELTSQSDDPA).

This sequence belongs to the OS-9 family. Interacts with missfolded ER lumenal proteins.

The protein localises to the endoplasmic reticulum membrane. Lectin involved in the quality control of the secretory pathway. As a member of the endoplasmic reticulum-associated degradation lumenal (ERAD-L) surveillance system, targets misfolded endoplasmic reticulum lumenal glycoproteins for degradation. This is Protein OS-9 homolog (YOS9) from Eremothecium gossypii (strain ATCC 10895 / CBS 109.51 / FGSC 9923 / NRRL Y-1056) (Yeast).